A 254-amino-acid polypeptide reads, in one-letter code: MSQLALQMSSLGVEGEGIWLALGTIGMLLGMLYFIADGLDVQDPRQKEFYVITILIPAIAAASYLSMFFGFGLTEVSLANGRVVDVYWARYADWLFTTPLLLLDIGLLAGASQRDIGALVGIDAFMIVTGLVATLTKVVVARYAFWTISTISMVFLLYYLVAVFGEAVSDADEDTRSTFNALRNIILVTWAIYPVAWLVGTEGLALTGLYGETLLFMVLDLVAKVGFGFILLRSRAIMGGGSEPTPSAQETAAD.

A propeptide spanning residues 1–6 (MSQLAL) is cleaved from the precursor. Glutamine 7 carries the post-translational modification Pyrrolidone carboxylic acid. A run of 7 helical transmembrane segments spans residues 16–36 (EGIWLALGTIGMLLGMLYFIA), 51–71 (VITILIPAIAAASYLSMFFGF), 91–111 (YADWLFTTPLLLLDIGLLAGA), 116–136 (IGALVGIDAFMIVTGLVATLT), 144–164 (AFWTISTISMVFLLYYLVAVF), 185–205 (IILVTWAIYPVAWLVGTEGLA), and 212–232 (ETLLFMVLDLVAKVGFGFILL). Lysine 224 bears the N6-(retinylidene)lysine mark.

Belongs to the archaeal/bacterial/fungal opsin family. In terms of processing, the covalent binding of retinal to the apoprotein, bacterioopsin, generates bacteriorhodopsin.

It is found in the cell membrane. Functionally, light-driven proton pump. This is Bacteriorhodopsin-I (bop1) from Haloquadratum walsbyi (strain DSM 16854 / JCM 12705 / C23).